The primary structure comprises 218 residues: N-(5'-phosphoribosyl)anthranilate isomerase (218 aa).

This sequence belongs to the TrpF family.

It carries out the reaction N-(5-phospho-beta-D-ribosyl)anthranilate = 1-(2-carboxyphenylamino)-1-deoxy-D-ribulose 5-phosphate. It participates in amino-acid biosynthesis; L-tryptophan biosynthesis; L-tryptophan from chorismate: step 3/5. The sequence is that of N-(5'-phosphoribosyl)anthranilate isomerase from Desulfatibacillum aliphaticivorans.